We begin with the raw amino-acid sequence, 293 residues long: Bifunctional protein FolD (293 aa).

NADP(+)-binding positions include 166–168 and I232; that span reads GAS.

It belongs to the tetrahydrofolate dehydrogenase/cyclohydrolase family. In terms of assembly, homodimer.

It carries out the reaction (6R)-5,10-methylene-5,6,7,8-tetrahydrofolate + NADP(+) = (6R)-5,10-methenyltetrahydrofolate + NADPH. The catalysed reaction is (6R)-5,10-methenyltetrahydrofolate + H2O = (6R)-10-formyltetrahydrofolate + H(+). It functions in the pathway one-carbon metabolism; tetrahydrofolate interconversion. Its function is as follows. Catalyzes the oxidation of 5,10-methylenetetrahydrofolate to 5,10-methenyltetrahydrofolate and then the hydrolysis of 5,10-methenyltetrahydrofolate to 10-formyltetrahydrofolate. This Yersinia enterocolitica serotype O:8 / biotype 1B (strain NCTC 13174 / 8081) protein is Bifunctional protein FolD.